The primary structure comprises 2646 residues: Probable inactive serine/threonine-protein kinase roco10 (2646 aa).

Disordered regions lie at residues 28–122, 138–168, 205–248, 281–457, 477–516, 605–656, and 882–907; these read LNYS…LSGG, NIPI…KDKD, PLFI…VSPS, QQQR…VKQA, MSKL…HTSP, TSPN…PHQY, and QSSS…STPS. Residues 46–56 are compositionally biased toward polar residues; sequence PQQNLLENDTL. Composition is skewed to low complexity over residues 78–115, 147–161, and 215–228; these read IITT…TSPS, SPTS…NNNN, and SRNN…GGNK. Over residues 235–248 the composition is skewed to polar residues; it reads KISSTSAAGDVSPS. Composition is skewed to low complexity over residues 285–297 and 325–334; these read NGNN…NNNN and NNNNNNNNNN. The span at 335 to 345 shows a compositional bias: polar residues; the sequence is KQPQHPMNGNH. A compositionally biased stretch (low complexity) spans 346–394; that stretch reads SPSNGTSGSLSMSGSGIDNGGNNNNNSNTHGSSSNQSSGVTSPIIQSTS. 2 stretches are compositionally biased toward polar residues: residues 402–416 and 428–443; these read GLNS…SSPT and TSAS…PLMN. Low complexity-rich tracts occupy residues 444 to 454, 491 to 516, 605 to 627, 634 to 651, and 883 to 907; these read STGVSSSSSGV, PSSP…HTSP, TSPN…NSSP, QQQQ…NTNT, and SSSS…STPS. The Rho-GAP domain occupies 585–807; that stretch reads SSISPISTAA…MFIQQADILF (223 aa). LRR repeat units follow at residues 968-987, 989-1011, 1012-1033, 1040-1061, 1062-1083, 1085-1108, 1109-1131, 1132-1154, 1155-1176, 1178-1199, 1201-1222, 1224-1247, 1248-1270, 1271-1298, and 1303-1327; these read QKLD…IKQL, DLQE…ARLT, SLRT…MADF, NLEN…YTWL, KLKT…IFQI, TLEV…CTST, KLRS…INLV, ELQV…QKLT, SLTE…LLLL, NLKK…IHRM, SLIE…IVAL, KLNS…YIQK, GKEG…YRTR, IIML…SFSS, and LPSL…ILDI. Residues 1262-1474 form the Roc domain; sequence TNVPCYRTRI…RDIKQMIAKN (213 aa). Disordered regions lie at residues 1293 to 1317, 1651 to 1670, and 1957 to 2026; these read KSSF…SNNS, NNNN…SRSM, and NNSS…KEKE. Residues 1651-1669 show a composition bias toward low complexity; sequence NNNNSNGNNVGRGRSGSRS. A compositionally biased stretch (polar residues) spans 1966 to 1975; it reads PIASSRSNPK. Positions 1983–1996 are enriched in low complexity; it reads NLIQSNNNDNNNSL. Residues 1997–2026 are compositionally biased toward basic and acidic residues; that stretch reads SKKDLKELAKQNKEKEKEKEKDKDKEKEKE. Residues 2049 to 2342 form the Protein kinase domain; sequence FSICHFIKEI…PSKIISQLYT (294 aa). ATP contacts are provided by residues 2055–2063 and lysine 2094; that span reads IKEIDYREI. Positions 2412-2536 constitute an RGS domain; sequence MVVLNNKQST…FTVPTTNKNG (125 aa).

This sequence belongs to the protein kinase superfamily. TKL Ser/Thr protein kinase family. ROCO subfamily.

This Dictyostelium discoideum (Social amoeba) protein is Probable inactive serine/threonine-protein kinase roco10 (roco10).